Here is an 805-residue protein sequence, read N- to C-terminus: Ribosome biogenesis protein ERB1 (805 aa).

The disordered stretch occupies residues M1–S105. The segment covering Q8–D22 has biased composition (basic and acidic residues). Residues E23 to A75 are compositionally biased toward acidic residues. Positions R264–S382 are required for interaction with NOP7. The tract at residues S382–P418 is required for interaction with YTM1. WD repeat units follow at residues G434–R473, N482–E522, V590–P632, K635–K673, P676–K715, Y719–K758, and G775–T805.

It belongs to the WD repeat BOP1/ERB1 family. Component of the NOP7 complex, composed of ERB1, NOP7 and YTM1. The complex is held together by ERB1, which interacts with NOP7 via its N-terminal domain and with YTM1 via a high-affinity interaction between the seven-bladed beta-propeller domains of the 2 proteins. The NOP7 complex associates with the 66S pre-ribosome.

The protein localises to the nucleus. It is found in the nucleolus. Its subcellular location is the nucleoplasm. In terms of biological role, component of the NOP7 complex, which is required for maturation of the 25S and 5.8S ribosomal RNAs and formation of the 60S ribosome. This Candida glabrata (strain ATCC 2001 / BCRC 20586 / JCM 3761 / NBRC 0622 / NRRL Y-65 / CBS 138) (Yeast) protein is Ribosome biogenesis protein ERB1.